Here is a 636-residue protein sequence, read N- to C-terminus: Threonine--tRNA ligase (636 aa).

A TGS domain is found at 1–61 (MPVITLPDGS…TQDASLQLIT (61 aa)). Residues 243-534 (DHRKIGKTLD…LIEEFTGKFP (292 aa)) are catalytic. Positions 334, 385, and 511 each coordinate Zn(2+).

Belongs to the class-II aminoacyl-tRNA synthetase family. Homodimer. Zn(2+) is required as a cofactor.

The protein localises to the cytoplasm. It carries out the reaction tRNA(Thr) + L-threonine + ATP = L-threonyl-tRNA(Thr) + AMP + diphosphate + H(+). Catalyzes the attachment of threonine to tRNA(Thr) in a two-step reaction: L-threonine is first activated by ATP to form Thr-AMP and then transferred to the acceptor end of tRNA(Thr). Also edits incorrectly charged L-seryl-tRNA(Thr). In Colwellia psychrerythraea (strain 34H / ATCC BAA-681) (Vibrio psychroerythus), this protein is Threonine--tRNA ligase.